The following is a 340-amino-acid chain: Glycerol-3-phosphate dehydrogenase [NAD(P)+] (340 aa).

Ser-11, Trp-12, Arg-33, and Lys-106 together coordinate NADPH. 3 residues coordinate sn-glycerol 3-phosphate: Lys-106, Gly-137, and Ser-139. Ala-141 serves as a coordination point for NADPH. Residues Lys-192, Asp-245, Ser-255, Arg-256, and Asn-257 each coordinate sn-glycerol 3-phosphate. The active-site Proton acceptor is Lys-192. Arg-256 provides a ligand contact to NADPH. The NADPH site is built by Val-280 and Glu-282.

It belongs to the NAD-dependent glycerol-3-phosphate dehydrogenase family.

It localises to the cytoplasm. It catalyses the reaction sn-glycerol 3-phosphate + NAD(+) = dihydroxyacetone phosphate + NADH + H(+). The enzyme catalyses sn-glycerol 3-phosphate + NADP(+) = dihydroxyacetone phosphate + NADPH + H(+). It functions in the pathway membrane lipid metabolism; glycerophospholipid metabolism. Functionally, catalyzes the reduction of the glycolytic intermediate dihydroxyacetone phosphate (DHAP) to sn-glycerol 3-phosphate (G3P), the key precursor for phospholipid synthesis. The protein is Glycerol-3-phosphate dehydrogenase [NAD(P)+] of Bacillus cereus (strain G9842).